A 240-amino-acid polypeptide reads, in one-letter code: Pyridoxine 5'-phosphate synthase (240 aa).

Asn-7 is a binding site for 3-amino-2-oxopropyl phosphate. 9–10 (DH) is a 1-deoxy-D-xylulose 5-phosphate binding site. Arg-18 serves as a coordination point for 3-amino-2-oxopropyl phosphate. His-43 functions as the Proton acceptor in the catalytic mechanism. Positions 45 and 50 each coordinate 1-deoxy-D-xylulose 5-phosphate. The Proton acceptor role is filled by Glu-70. Residue Thr-100 participates in 1-deoxy-D-xylulose 5-phosphate binding. Residue His-191 is the Proton donor of the active site. 3-amino-2-oxopropyl phosphate contacts are provided by residues Gly-192 and 213 to 214 (GH).

It belongs to the PNP synthase family. In terms of assembly, homooctamer; tetramer of dimers.

It localises to the cytoplasm. It catalyses the reaction 3-amino-2-oxopropyl phosphate + 1-deoxy-D-xylulose 5-phosphate = pyridoxine 5'-phosphate + phosphate + 2 H2O + H(+). It participates in cofactor biosynthesis; pyridoxine 5'-phosphate biosynthesis; pyridoxine 5'-phosphate from D-erythrose 4-phosphate: step 5/5. Functionally, catalyzes the complicated ring closure reaction between the two acyclic compounds 1-deoxy-D-xylulose-5-phosphate (DXP) and 3-amino-2-oxopropyl phosphate (1-amino-acetone-3-phosphate or AAP) to form pyridoxine 5'-phosphate (PNP) and inorganic phosphate. This is Pyridoxine 5'-phosphate synthase from Cyanothece sp. (strain PCC 7425 / ATCC 29141).